The chain runs to 343 residues: Heat-inducible transcription repressor HrcA (343 aa).

It belongs to the HrcA family.

Its function is as follows. Negative regulator of class I heat shock genes (grpE-dnaK-dnaJ and groELS operons). Prevents heat-shock induction of these operons. In Bacillus velezensis (strain DSM 23117 / BGSC 10A6 / LMG 26770 / FZB42) (Bacillus amyloliquefaciens subsp. plantarum), this protein is Heat-inducible transcription repressor HrcA.